The chain runs to 228 residues: MKKLLLIAATSATVLSSALSFADCGNDSWYLRVDAGAAMFNKEKDNQTGLKLKSNTAFTGDIGVGNYIAENFRADLTLGTTFSGKLKKSGAVSSLGGANISASHKPNITRLLINGYVDLSNFEMFDVFAGAGIGASMLKEKVSFSGINSGATVSTSYSSKNTTNLAYKLTLGASSQISDGVKAELAYSWISDGKTKGGNVNLFGLGNKQVKGTRYQSHNLTAGLRFDV.

The signal sequence occupies residues 1–22 (MKKLLLIAATSATVLSSALSFA).

The protein is Putative adhesin A1I_01215 of Rickettsia bellii (strain OSU 85-389).